The sequence spans 422 residues: Serine--tRNA ligase (422 aa).

L-serine is bound at residue 229–231 (TAE). 260-262 (RKE) is a binding site for ATP. Glutamate 283 lines the L-serine pocket. 347–350 (EISS) lines the ATP pocket. An L-serine-binding site is contributed by serine 383.

Belongs to the class-II aminoacyl-tRNA synthetase family. Type-1 seryl-tRNA synthetase subfamily. As to quaternary structure, homodimer. The tRNA molecule binds across the dimer.

Its subcellular location is the cytoplasm. It catalyses the reaction tRNA(Ser) + L-serine + ATP = L-seryl-tRNA(Ser) + AMP + diphosphate + H(+). The catalysed reaction is tRNA(Sec) + L-serine + ATP = L-seryl-tRNA(Sec) + AMP + diphosphate + H(+). Its pathway is aminoacyl-tRNA biosynthesis; selenocysteinyl-tRNA(Sec) biosynthesis; L-seryl-tRNA(Sec) from L-serine and tRNA(Sec): step 1/1. Its function is as follows. Catalyzes the attachment of serine to tRNA(Ser). Is also able to aminoacylate tRNA(Sec) with serine, to form the misacylated tRNA L-seryl-tRNA(Sec), which will be further converted into selenocysteinyl-tRNA(Sec). The protein is Serine--tRNA ligase of Natranaerobius thermophilus (strain ATCC BAA-1301 / DSM 18059 / JW/NM-WN-LF).